A 147-amino-acid polypeptide reads, in one-letter code: Large ribosomal subunit protein bL9 (147 aa).

Belongs to the bacterial ribosomal protein bL9 family.

Binds to the 23S rRNA. In Campylobacter jejuni subsp. jejuni serotype O:23/36 (strain 81-176), this protein is Large ribosomal subunit protein bL9.